The chain runs to 378 residues: tRNA-specific 2-thiouridylase MnmA (378 aa).

ATP is bound by residues 6-13 (AMSGGVDS) and leucine 32. Residue cysteine 101 is the Nucleophile of the active site. A disulfide bridge links cysteine 101 with cysteine 199. Position 125 (glycine 125) interacts with ATP. Residues 148–150 (KDQ) are interaction with tRNA. The active-site Cysteine persulfide intermediate is the cysteine 199.

It belongs to the MnmA/TRMU family.

It localises to the cytoplasm. The catalysed reaction is S-sulfanyl-L-cysteinyl-[protein] + uridine(34) in tRNA + AH2 + ATP = 2-thiouridine(34) in tRNA + L-cysteinyl-[protein] + A + AMP + diphosphate + H(+). Functionally, catalyzes the 2-thiolation of uridine at the wobble position (U34) of tRNA, leading to the formation of s(2)U34. In Micrococcus luteus (strain ATCC 4698 / DSM 20030 / JCM 1464 / CCM 169 / CCUG 5858 / IAM 1056 / NBRC 3333 / NCIMB 9278 / NCTC 2665 / VKM Ac-2230) (Micrococcus lysodeikticus), this protein is tRNA-specific 2-thiouridylase MnmA.